The chain runs to 975 residues: Glycine dehydrogenase (decarboxylating) (975 aa).

Lys-723 carries the post-translational modification N6-(pyridoxal phosphate)lysine.

The protein belongs to the GcvP family. As to quaternary structure, the glycine cleavage system is composed of four proteins: P, T, L and H. It depends on pyridoxal 5'-phosphate as a cofactor.

The catalysed reaction is N(6)-[(R)-lipoyl]-L-lysyl-[glycine-cleavage complex H protein] + glycine + H(+) = N(6)-[(R)-S(8)-aminomethyldihydrolipoyl]-L-lysyl-[glycine-cleavage complex H protein] + CO2. Its function is as follows. The glycine cleavage system catalyzes the degradation of glycine. The P protein binds the alpha-amino group of glycine through its pyridoxal phosphate cofactor; CO(2) is released and the remaining methylamine moiety is then transferred to the lipoamide cofactor of the H protein. The sequence is that of Glycine dehydrogenase (decarboxylating) from Burkholderia pseudomallei (strain 668).